Here is a 57-residue protein sequence, read N- to C-terminus: Probable mRNA interferase HicA 1 (57 aa).

The protein belongs to the HicA mRNA interferase family. In terms of assembly, probably forms a complex with the cognate antitoxin HicB 1 which inhibits the mRNA interferase activity.

Toxic component of a type II toxin-antitoxin (TA) system. A probable translation-independent mRNA interferase. The chain is Probable mRNA interferase HicA 1 (hicA1) from Photorhabdus laumondii subsp. laumondii (strain DSM 15139 / CIP 105565 / TT01) (Photorhabdus luminescens subsp. laumondii).